A 339-amino-acid chain; its full sequence is MYQLFRHGIFQMDAEKAHDFTIQCLKLASNPLFQPILKSLIHAPKGFPKTVMGVNFPNPIGLAAGADKNGDAIDGFGTLGFGFLEVGTVTPVAQDGNAKPRQFRLIEAEGIINRNGFNNNGIDYLIENVKNARYKGVIGINIGKNKFTSLEQGKDDYIFCLNKAYNYAGYITVNISSPNTPDLRQLQYGDYFDDLLRSIKDRQAILANQYNKYVPIAVKIAPDLTESELVQIADTLVRHKMDGVIATNTTVSRDTVMGMKNAEQQGGLSGKPLQHKSTEIIKRLHQELKGQIPIIGSGGIDGLQNAQEKIEAGAELLQVYSGLIYHGPKLVKELVKNIK.

Residues 64–68 and T88 contribute to the FMN site; that span reads AGADK. K68 contributes to the substrate binding site. 113 to 117 serves as a coordination point for substrate; sequence NRNGF. Residues N141 and N174 each coordinate FMN. N174 serves as a coordination point for substrate. S177 acts as the Nucleophile in catalysis. A substrate-binding site is contributed by N179. Residues K219 and T247 each contribute to the FMN site. 248–249 contacts substrate; it reads NT. Residues G270, G299, and 320-321 each bind FMN; that span reads YS.

This sequence belongs to the dihydroorotate dehydrogenase family. Type 2 subfamily. As to quaternary structure, monomer. It depends on FMN as a cofactor.

The protein resides in the cell membrane. The enzyme catalyses (S)-dihydroorotate + a quinone = orotate + a quinol. Its pathway is pyrimidine metabolism; UMP biosynthesis via de novo pathway; orotate from (S)-dihydroorotate (quinone route): step 1/1. Functionally, catalyzes the conversion of dihydroorotate to orotate with quinone as electron acceptor. This is Dihydroorotate dehydrogenase (quinone) from Haemophilus influenzae (strain 86-028NP).